Consider the following 261-residue polypeptide: tRNA pseudouridine synthase A (261 aa).

The active-site Nucleophile is the Asp-51. Residue Tyr-109 coordinates substrate.

This sequence belongs to the tRNA pseudouridine synthase TruA family. Homodimer.

It carries out the reaction uridine(38/39/40) in tRNA = pseudouridine(38/39/40) in tRNA. In terms of biological role, formation of pseudouridine at positions 38, 39 and 40 in the anticodon stem and loop of transfer RNAs. In Psychromonas ingrahamii (strain DSM 17664 / CCUG 51855 / 37), this protein is tRNA pseudouridine synthase A.